The sequence spans 703 residues: Hyperosmolality-gated Ca2+ permeable channel 2.3 (703 aa).

Over 1-3 the chain is Extracellular; that stretch reads MLL. Residues 4-26 form a helical membrane-spanning segment; it reads SALLTSVGINLGLCFLFFTLYSI. At 27 to 81 the chain is on the cytoplasmic side; that stretch reads LRKQPSNVTVYGPRLVKKDGKSQQSNEFNLERLLPTAGWVKRALEPTNDEILSNL. Residues 82 to 115 traverse the membrane as a helical segment; that stretch reads GLDALVFIRVFVFSIRVFSFASVVGIFILLPVNY. Topologically, residues 116 to 143 are extracellular; sequence MGTEFEEFFDLPKKSMDNFSISNVNDGS. Residues 144 to 165 form a helical membrane-spanning segment; that stretch reads NKLWIHFCAIYIFTAVVCSLLY. Residues 166 to 355 are Cytoplasmic-facing; it reads YEHKYILTKR…TASFVRRWIS (190 aa). Positions 228–300 form a coiled coil; the sequence is RTDKLKVLMN…LKQSLLAGEE (73 aa). The chain crosses the membrane as a helical span at residues 356-382; that stretch reads NVVVLVAFVALLILYIVPVVLVQGLAN. At 383-410 the chain is on the extracellular side; sequence LHQLETWFPFLKGILNMKIVSQVITGYL. A helical membrane pass occupies residues 411–432; the sequence is PSLIFQLFLLIVPPIMLLLSSM. Topologically, residues 433–436 are cytoplasmic; sequence QGFI. A helical membrane pass occupies residues 437–463; the sequence is SHSQIEKSACIKLLIFTVWNSFFANVL. Residues 464 to 489 lie on the Extracellular side of the membrane; that stretch reads SGSALYRVNVFLEPKTIPRVLAAAVP. The helical transmembrane segment at 490 to 512 threads the bilayer; that stretch reads AQASFFVSYVVTSGWTGLSSEIL. Residues 513-540 lie on the Cytoplasmic side of the membrane; the sequence is RLVPLLWSFITKLFGKEDDKEFEVPSTP. A helical membrane pass occupies residues 541-561; the sequence is FCQEIPRILFFGLLGITYFFL. Serine 562 is a topological domain (extracellular). Residues 563-586 form a helical membrane-spanning segment; it reads PLILPFLLVYYCLGYIIYRNQLLN. The Cytoplasmic portion of the chain corresponds to 587 to 598; the sequence is VYAAKYETGGKF. A helical transmembrane segment spans residues 599–623; it reads WPIVHSYTIFSLVLMHIIAVGLFGL. Topologically, residues 624 to 626 are extracellular; that stretch reads KEL. Residues 627-655 traverse the membrane as a helical segment; sequence PVASSLTIPLPVLTVLFSIYCQRRFLPNF. The Cytoplasmic portion of the chain corresponds to 656-703; that stretch reads KSYPTQCLVNKDKADEREQNMSEFYSELVVAYRDPALSASQDSRDISP.

It belongs to the CSC1 (TC 1.A.17) family. In terms of assembly, homodimer.

The protein localises to the membrane. Acts as an osmosensitive calcium-permeable cation channel. The protein is Hyperosmolality-gated Ca2+ permeable channel 2.3 of Arabidopsis thaliana (Mouse-ear cress).